We begin with the raw amino-acid sequence, 149 residues long: UPF0260 protein Pmen_1776 (149 aa).

Belongs to the UPF0260 family.

The polypeptide is UPF0260 protein Pmen_1776 (Ectopseudomonas mendocina (strain ymp) (Pseudomonas mendocina)).